Reading from the N-terminus, the 845-residue chain is AdoMet-dependent rRNA methyltransferase SPB1 (845 aa).

Residues Gly58, Trp60, Asp78, Asp94, and Asp119 each coordinate S-adenosyl-L-methionine. The active-site Proton acceptor is Lys159. Disordered stretches follow at residues 223–247 and 279–298; these read GGGN…SQRQ and SLNK…DDDH. Coiled-coil stretches lie at residues 366–402 and 464–502; these read TEEQ…KEII and DEEE…ERDA. Residues 496 to 512 are compositionally biased toward basic and acidic residues; that stretch reads RKAERDANYRAKQARGD. Disordered regions lie at residues 496–546, 587–660, and 788–821; these read RKAE…DDDE, ENKT…HQQK, and KLNK…VKGK. Composition is skewed to acidic residues over residues 513-528, 536-545, 610-624, and 633-648; these read ADDE…NDDV, MESESDDDDD, NEND…ESDF, and DDDD…DDEV. Positions 739–796 form a coiled coil; that stretch reads IKKVLEAQSRKKLRALKRLEKIKKKSDLINEDSGKSERDKADEISKLMKKLNKKQKQK. Residues 788–797 show a composition bias toward basic residues; sequence KLNKKQKQKP.

Belongs to the class I-like SAM-binding methyltransferase superfamily. RNA methyltransferase RlmE family. SPB1 subfamily. Component of the nucleolar and nucleoplasmic pre-60S ribosomal particle.

It is found in the nucleus. It localises to the nucleolus. It catalyses the reaction a ribonucleotide in rRNA + S-adenosyl-L-methionine = a 2'-O-methylribonucleotide in rRNA + S-adenosyl-L-homocysteine + H(+). Its function is as follows. Required for proper assembly of pre-ribosomal particles during the biogenesis of the 60S ribosomal subunit. In Candida albicans (strain SC5314 / ATCC MYA-2876) (Yeast), this protein is AdoMet-dependent rRNA methyltransferase SPB1.